The primary structure comprises 211 residues: 5,6-dimethylbenzimidazole synthase (211 aa).

FMN-binding positions include 22-26 (RRDVR), Ser50, Leu99, and Ser158.

It belongs to the BluB family. As to quaternary structure, homooctamer.

The enzyme catalyses FMNH2 + O2 = dialurate + 5,6-dimethylbenzimidazole + D-erythrose 4-phosphate + H(+). Its function is as follows. Involved in the biosynthesis of cobalamin (vitamin B12). Catalyzes the oxidative fragmentation and contraction of the isoalloxazine heterocycle and the cleavage of the ribityl tail of FMNH(2) to form 5,6-dimethylbenzimidazole (DMB) and D-erythrose 4-phosphate (E4P). NAD(P)H is only required initially to reduce FMN and oxygen drives the oxidative fragmentation. This is 5,6-dimethylbenzimidazole synthase from Rhodospirillum rubrum (strain ATCC 11170 / ATH 1.1.1 / DSM 467 / LMG 4362 / NCIMB 8255 / S1).